A 265-amino-acid chain; its full sequence is Bidirectional sugar transporter NEC1 (265 aa).

Residues 1–8 (MAQLRADD) are Extracellular-facing. The chain crosses the membrane as a helical span at residues 9-29 (LSFIFGLLGNIVSFMVFLAPV). The MtN3/slv 1 domain maps to 11–97 (FIFGLLGNIV…SLFLFYAPRK (87 aa)). Over 30 to 44 (PTFYKIYKRKSSEGY) the chain is Cytoplasmic. The chain crosses the membrane as a helical span at residues 45–65 (QAIPYMVALFSAGLLLYYAYL). Topologically, residues 66–71 (RKNAYL) are extracellular. A helical membrane pass occupies residues 72-92 (IVSINGFGCAIELTYISLFLF). Topologically, residues 93 to 103 (YAPRKSKIFTG) are cytoplasmic. Residues 104–124 (WLMLLELGALGMVMPITYLLA) traverse the membrane as a helical segment. The Extracellular segment spans residues 125–130 (EGSHRV). Residues 131–151 (MIVGWICAAINVAVFAAPLSI) form a helical membrane-spanning segment. Residues 132-216 (IVGWICAAIN…LLYFVYKDSK (85 aa)) enclose the MtN3/slv 2 domain. The Cytoplasmic segment spans residues 152 to 164 (MRQVIKTKSVEFM). A helical transmembrane segment spans residues 165-185 (PFTLSLFLTLCATMWFFYGFF). Over 186 to 190 (KKDFY) the chain is Extracellular. Residues 191-211 (IAFPNILGFLFGIVQMLLYFV) form a helical membrane-spanning segment. Topologically, residues 212–265 (YKDSKRIDDEKSDPVREATKSKEGVEIIINIEDDNSDNALQSMEKDFSRLRTSK) are cytoplasmic.

Belongs to the SWEET sugar transporter family. In terms of assembly, forms homooligomers and/or heterooligomers. Highly expressed in nectary tissue and weakly in the stamen, especially in stomium cells and in the upper part of the filaments.

The protein localises to the cell membrane. Mediates both low-affinity uptake and efflux of sugar across the plasma membrane. Promotes the formation of phloem bundles in mid-veins. Probably involved in the development of stomium cells that control anther opening time. Required for pollen viability. This chain is Bidirectional sugar transporter NEC1 (NEC1), found in Petunia hybrida (Petunia).